A 334-amino-acid chain; its full sequence is Protein RecA (334 aa).

Residue 65–72 coordinates ATP; it reads GNESSGKT.

This sequence belongs to the RecA family.

It localises to the cytoplasm. Its function is as follows. Can catalyze the hydrolysis of ATP in the presence of single-stranded DNA, the ATP-dependent uptake of single-stranded DNA by duplex DNA, and the ATP-dependent hybridization of homologous single-stranded DNAs. It interacts with LexA causing its activation and leading to its autocatalytic cleavage. The chain is Protein RecA from Ureaplasma parvum serovar 3 (strain ATCC 27815 / 27 / NCTC 11736).